Consider the following 53-residue polypeptide: uncharacterized protein (53 aa).

Low complexity predominate over residues 14–33 (SPSSLNNNNNINSKSLQINS). Residues 14–53 (SPSSLNNNNNINSKSLQINSENKSKIQNNNPLGNKGGVQF) are disordered.

This is an uncharacterized protein from Dictyostelium discoideum (Social amoeba).